Consider the following 393-residue polypeptide: Protein TsgA (393 aa).

12 consecutive transmembrane segments (helical) span residues tryptophan 11–methionine 31, phenylalanine 51–proline 71, phenylalanine 78–leucine 98, alanine 101–isoleucine 121, leucine 134–phenylalanine 154, tryptophan 162–glycine 182, isoleucine 206–isoleucine 226, alanine 245–leucine 265, isoleucine 273–glutamine 293, tryptophan 298–glycine 318, phenylalanine 332–valine 352, and leucine 361–valine 381.

This sequence belongs to the major facilitator superfamily. TsgA family.

It localises to the cell inner membrane. This Salmonella schwarzengrund (strain CVM19633) protein is Protein TsgA.